The sequence spans 428 residues: Adenylosuccinate synthetase (428 aa).

GTP contacts are provided by residues 12–18 and 40–42; these read GDEGKGK and GHT. The active-site Proton acceptor is Asp-13. The Mg(2+) site is built by Asp-13 and Gly-40. IMP contacts are provided by residues 13 to 16, 38 to 41, Thr-129, Arg-143, Gln-224, Thr-239, and Arg-303; these read DEGK and NAGH. Residue His-41 is the Proton donor of the active site. Substrate is bound at residue 299–305; sequence VTTGRIR. GTP contacts are provided by residues Arg-305, 331–333, and 410–412; these read KVD and AYG.

Belongs to the adenylosuccinate synthetase family. In terms of assembly, homodimer. The cofactor is Mg(2+).

The protein localises to the cytoplasm. The enzyme catalyses IMP + L-aspartate + GTP = N(6)-(1,2-dicarboxyethyl)-AMP + GDP + phosphate + 2 H(+). Its pathway is purine metabolism; AMP biosynthesis via de novo pathway; AMP from IMP: step 1/2. In terms of biological role, plays an important role in the de novo pathway of purine nucleotide biosynthesis. Catalyzes the first committed step in the biosynthesis of AMP from IMP. The protein is Adenylosuccinate synthetase of Francisella tularensis subsp. mediasiatica (strain FSC147).